A 446-amino-acid chain; its full sequence is Casein kinase I homolog 1 (446 aa).

A Protein kinase domain is found at 12–274 (YKVGRRIGEG…FDATPDYDYL (263 aa)). Residues 18-26 (IGEGSFGVI) and Lys41 contribute to the ATP site. The Proton acceptor role is filled by Asp131. Residues 308–430 (KSRNAETENQ…ETEAPKKKKS (123 aa)) form a disordered region. Residue Ser329 is modified to Phosphoserine. Polar residues predominate over residues 332–345 (PALQNHASTQNVVS). Residues 346–355 (KRSDYEKPFA) are compositionally biased toward basic and acidic residues. Over residues 360-397 (NSASDSAEPNQNSLPNPPTETKATTTVPDRSGLATNQP) the composition is skewed to polar residues. Residues 401 to 412 (DVHDSSEERVTR) are compositionally biased toward basic and acidic residues.

Belongs to the protein kinase superfamily. CK1 Ser/Thr protein kinase family. Casein kinase I subfamily.

It localises to the cytoplasm. The catalysed reaction is L-seryl-[protein] + ATP = O-phospho-L-seryl-[protein] + ADP + H(+). It catalyses the reaction L-threonyl-[protein] + ATP = O-phospho-L-threonyl-[protein] + ADP + H(+). Its function is as follows. Casein kinases are operationally defined by their preferential utilization of acidic proteins such as caseins as substrates. The chain is Casein kinase I homolog 1 (cki1) from Schizosaccharomyces pombe (strain 972 / ATCC 24843) (Fission yeast).